The following is a 1234-amino-acid chain: DNA-directed RNA polymerase I subunit RPA2 (1234 aa).

The C4-type zinc finger occupies 1119–1150; the sequence is CRQCGSFLSTQPTVSPFIGKRKAVSTVRCRNC.

This sequence belongs to the RNA polymerase beta chain family. In terms of assembly, component of the RNA polymerase I (Pol I) complex consisting of 14 subunits.

Its subcellular location is the nucleus. The protein resides in the nucleolus. It catalyses the reaction RNA(n) + a ribonucleoside 5'-triphosphate = RNA(n+1) + diphosphate. Its function is as follows. DNA-dependent RNA polymerase catalyzes the transcription of DNA into RNA using the four ribonucleoside triphosphates as substrates. Second largest core component of RNA polymerase I which synthesizes ribosomal RNA precursors. Proposed to contribute to the polymerase catalytic activity and forms the polymerase active center together with the largest subunit. Pol I is composed of mobile elements and RPA2 is part of the core element with the central large cleft and probably a clamp element that moves to open and close the cleft. The sequence is that of DNA-directed RNA polymerase I subunit RPA2 (acr-2) from Neurospora crassa (strain ATCC 24698 / 74-OR23-1A / CBS 708.71 / DSM 1257 / FGSC 987).